The sequence spans 160 residues: CXXC motif containing zinc binding protein (160 aa).

Zn(2+) is bound by residues Cys33, Cys36, Cys67, and Cys70. Ser75 is modified (phosphoserine).

It belongs to the UPF0587 family. Monomer.

This is CXXC motif containing zinc binding protein from Rattus norvegicus (Rat).